A 604-amino-acid chain; its full sequence is Zinc finger protein chinmo (604 aa).

In terms of domain architecture, BTB spans 32-98 (ADVILSCDGV…MYKGEVHVSQ (67 aa)). 4 disordered regions span residues 122 to 155 (RLAA…SGGS), 291 to 310 (CDSL…GYTH), 330 to 437 (RSPY…DEST), and 450 to 470 (NLKY…TPNT). The segment covering 364–374 (PSSSASSTAPT) has biased composition (low complexity). Polar residues predominate over residues 384 to 409 (ASPQSSRYENHSPSTTAGNGNATSSL). The span at 425-437 (ANDDDRELMDEST) shows a compositional bias: acidic residues. Residues 461-470 (SNTSSTTPNT) show a composition bias toward low complexity. 2 C2H2-type zinc fingers span residues 517-540 (LKCL…RQRH) and 545-568 (VPCP…AREH).

As to expression, broadly expressed in the developing larval central nervous system (at protein level). Expressed in the larval lymph gland and circulating hemocytes (at protein level). Expressed in all cell types of the adult testis stem cell niche but not detected in somatic cells of the adult ovary (at protein level). In the testis, expressed at high levels in cyst stem cells and early cyst cells and, at lower levels, in germline stem cells (at protein level).

The protein localises to the nucleus. Functionally, required for morphological differentiation of postmitotic neurons during postembryonic brain development. Ensures production of appropriate neuron subtypes within a lineage by preventing precocious generation of late neuronal types of that lineage. Acts as a downstream mediator of the transcriptional activator Stat92e and is required for the development of the eye-antennal disk which gives rise to the adult eye, antenna and head capsule, for transcriptional repression of the Notch receptor ligand Ser and for the self-renewal of cyst stem cells in the testis. In the adult testis, maintains the male identify of adult somatic cyst stem cells. Represses expression and alternative splicing of transformer pre-mRNA, resulting in the production of the male-specific isoform of transcription factor dsx which ensures male-specific transcription of target genes. Plays a role in actin nuclear localization through its involvement in repressing the expression of the kinase Cdi. This maintains the cofilin/actin-depolymerizing factor homolog tsr in its unphosphorylated state which is required for actin nuclear import. This chain is Zinc finger protein chinmo, found in Drosophila melanogaster (Fruit fly).